The primary structure comprises 359 residues: MVRPMLLLSLGLLAGLLPALAACPQNCHCHSDLQHVICDKVGLQKIPKVSEKTKLLNLQRNNFPVLAANSFRAMPNLVSLHLQHCQIREVAAGAFRGLKQLIYLYLSHNDIRVLRAGAFDDLTELTYLYLDHNKVTELPRGLLSPLVNLFILQLNNNKIRELRAGAFQGAKDLRWLYLSENALSSLQPGALDDVENLAKFHVDRNQLSSYPSAALSKLRVVEELKLSHNPLKSIPDNAFQSFGRYLETLWLDNTNLEKFSDGAFLGVTTLKHVHLENNRLNQLPSNFPFDSLETLALTNNPWKCTCQLRGLRRWLEAKASRPDATCASPAKFKGQHIRDTDAFRSCKFPTKRSKKAGRH.

An N-terminal signal peptide occupies residues Met-1–Ala-22. Residues Cys-23 and Cys-38 are joined by a disulfide bond. In terms of domain architecture, LRRNT spans Cys-23 to Lys-52. LRR repeat units follow at residues Asn-76–Gly-97, Gln-100–Asp-121, Glu-124–Pro-145, Asn-148–Gly-169, Asp-172–Asp-193, Asn-196–Lys-217, Val-220–Ser-241, Tyr-245–Gly-266, and Thr-269–Asp-290. An O-linked (GalNAc...) serine glycan is attached at Ser-144. In terms of domain architecture, LRRCT spans Asn-300–Phe-348. 2 disulfide bridges follow: Cys-304–Cys-346 and Cys-306–Cys-326.

Belongs to the small leucine-rich proteoglycan (SLRP) family. SLRP class IV subfamily. Mostly monomeric. Interacts with collagen type II. As to expression, present in chondrocytes at all ages.

The protein resides in the secreted. It is found in the extracellular space. Its subcellular location is the extracellular matrix. Functionally, promotes attachment of chondrocytes, fibroblasts, and osteoblasts. This binding is mediated (at least for chondrocytes and fibroblasts) by the integrin alpha(2)beta(1). May play an important role in the regulation of chondrocyte growth and proliferation. This is Chondroadherin (CHAD) from Homo sapiens (Human).